The chain runs to 475 residues: Bifunctional protein HldE (475 aa).

Residues 1–318 (MKITLPEFGK…ANALYTEQET (318 aa)) form a ribokinase region. ATP is bound at residue 195–198 (NMSE). D264 is an active-site residue. A cytidylyltransferase region spans residues 344–475 (MTNGCFDILH…DIIKTIRERG (132 aa)).

In the N-terminal section; belongs to the carbohydrate kinase PfkB family. The protein in the C-terminal section; belongs to the cytidylyltransferase family. As to quaternary structure, homodimer.

It carries out the reaction D-glycero-beta-D-manno-heptose 7-phosphate + ATP = D-glycero-beta-D-manno-heptose 1,7-bisphosphate + ADP + H(+). It catalyses the reaction D-glycero-beta-D-manno-heptose 1-phosphate + ATP + H(+) = ADP-D-glycero-beta-D-manno-heptose + diphosphate. Its pathway is nucleotide-sugar biosynthesis; ADP-L-glycero-beta-D-manno-heptose biosynthesis; ADP-L-glycero-beta-D-manno-heptose from D-glycero-beta-D-manno-heptose 7-phosphate: step 1/4. It functions in the pathway nucleotide-sugar biosynthesis; ADP-L-glycero-beta-D-manno-heptose biosynthesis; ADP-L-glycero-beta-D-manno-heptose from D-glycero-beta-D-manno-heptose 7-phosphate: step 3/4. Functionally, catalyzes the phosphorylation of D-glycero-D-manno-heptose 7-phosphate at the C-1 position to selectively form D-glycero-beta-D-manno-heptose-1,7-bisphosphate. Catalyzes the ADP transfer from ATP to D-glycero-beta-D-manno-heptose 1-phosphate, yielding ADP-D-glycero-beta-D-manno-heptose. The chain is Bifunctional protein HldE from Aeromonas salmonicida (strain A449).